The chain runs to 37 residues: Large ribosomal subunit protein bL36 (37 aa).

This sequence belongs to the bacterial ribosomal protein bL36 family.

This is Large ribosomal subunit protein bL36 from Helicobacter pylori (strain HPAG1).